We begin with the raw amino-acid sequence, 218 residues long: Glycerol-3-phosphate acyltransferase 2 (218 aa).

Transmembrane regions (helical) follow at residues 6–26, 50–70, 85–105, 115–135, and 159–179; these read YLLIFILAYLIGSFPTGVLVG, VMGPVAGSAVLVIDVLKGTLA, LLLIAGACAILGHTFSIFLKF, AGVFLGYNLKFFGLCALVFLP, and FWFHDIFLTIITGIMMILLFV.

The protein belongs to the PlsY family. Probably interacts with PlsX.

The protein localises to the cell membrane. The enzyme catalyses an acyl phosphate + sn-glycerol 3-phosphate = a 1-acyl-sn-glycero-3-phosphate + phosphate. Its pathway is lipid metabolism; phospholipid metabolism. Functionally, catalyzes the transfer of an acyl group from acyl-phosphate (acyl-PO(4)) to glycerol-3-phosphate (G3P) to form lysophosphatidic acid (LPA). This enzyme utilizes acyl-phosphate as fatty acyl donor, but not acyl-CoA or acyl-ACP. The polypeptide is Glycerol-3-phosphate acyltransferase 2 (Lactobacillus johnsonii (strain CNCM I-12250 / La1 / NCC 533)).